A 231-amino-acid polypeptide reads, in one-letter code: Putative cobalt transport protein CbiM 1 (231 aa).

6 helical membrane passes run 9-29 (PGPW…YGIF), 41-61 (VLPL…LKLP), 74-94 (GMAV…IVLL), 107-127 (TFGA…YAIY), 135-155 (VNFY…TYVV), and 181-201 (VFAI…TLLF).

This sequence belongs to the CbiM family. As to quaternary structure, forms an energy-coupling factor (ECF) transporter complex composed of an ATP-binding protein (A component, CbiO), a transmembrane protein (T component, CbiQ) and 2 possible substrate-capture proteins (S components, CbiM and CbiN) of unknown stoichimetry.

It is found in the cell membrane. Its pathway is cofactor biosynthesis; adenosylcobalamin biosynthesis. In terms of biological role, part of the energy-coupling factor (ECF) transporter complex CbiMNOQ involved in cobalt import. This chain is Putative cobalt transport protein CbiM 1, found in Methanosarcina barkeri (strain Fusaro / DSM 804).